The sequence spans 415 residues: Dynein assembly factor with WD repeat domains 1 (415 aa).

WD repeat units follow at residues 90–129 (AHIL…ELHT), 132–174 (GHKN…HTFR), 175–214 (GHTA…EVVT), 217–256 (GHLA…KVHT), 259–298 (GHCA…YVAT), 301–340 (GHDD…CVTK), 343–384 (GHEG…QVLE), and 386–415 (HTDE…RIWR).

This sequence belongs to the WD repeat WDR69 family. In terms of assembly, interacts with IFT46. As to expression, in early mouse embryos, expression is limited to distal, motile ciliated cells of the node.

It is found in the cytoplasm. Its subcellular location is the cytoskeleton. The protein localises to the flagellum basal body. The protein resides in the flagellum axoneme. Required for axonemal dynein assembly and ciliary motility in ciliated organs, including Kupffer's vesicle, during embryogenesis. Facilitates the onset of robust cilia motility during development. The protein is Dynein assembly factor with WD repeat domains 1 of Mus musculus (Mouse).